A 121-amino-acid chain; its full sequence is Type II secretion system protein I (121 aa).

Positions 1-6 (MRRQKG) are cleaved as a propeptide — leader sequence. Met-7 is subject to N-methylmethionine. Residues 7–27 (MTLVEVLVALSVFALAGIAVL) form a helical membrane-spanning segment.

This sequence belongs to the GSP I family. In terms of assembly, type II secretion is composed of four main components: the outer membrane complex, the inner membrane complex, the cytoplasmic secretion ATPase and the periplasm-spanning pseudopilus. Interacts with core component OutG. Cleaved by prepilin peptidase. Post-translationally, methylated by prepilin peptidase at the amino group of the N-terminal methionine once the leader sequence is cleaved by prepilin peptidase.

Its subcellular location is the cell inner membrane. Its function is as follows. Component of the type II secretion system required for the energy-dependent secretion of extracellular factors such as proteases and toxins from the periplasm. Part of the pseudopilus tip complex that is critical for the recognition and binding of secretion substrates. The chain is Type II secretion system protein I (outI) from Pectobacterium carotovorum subsp. carotovorum (Erwinia carotovora subsp. carotovora).